The primary structure comprises 170 residues: uncharacterized protein (170 aa).

Residues 1–15 (MFLTSPFESCIVLSS) lie on the Cytoplasmic side of the membrane. Residues 16–36 (LIAGLLFSLSTGFVGILGVFA) traverse the membrane as a helical segment. The Extracellular segment spans residues 37–76 (SLFETELSVSPKRLSLSSLSWPKTFWALLSSVEGVSWESS). Residues 77–97 (LFACIVGCCFAVTVIASLSAS) form a helical membrane-spanning segment. Residues 98 to 119 (RVFGTVASSFRDSSCCCDSSPA) lie on the Cytoplasmic side of the membrane. Residues 120–140 (VSVLATPATAALALLSLLLSL) form a helical membrane-spanning segment. Residues 141-170 (PCWSTSTEAFTVDPSPSVFSMLANRITIGL) lie on the Extracellular side of the membrane.

The protein localises to the membrane. This is an uncharacterized protein from Saccharomyces cerevisiae (strain ATCC 204508 / S288c) (Baker's yeast).